Here is a 169-residue protein sequence, read N- to C-terminus: Shikimate kinase (169 aa).

13–18 is an ATP binding site; it reads GAGKST. A Mg(2+)-binding site is contributed by S17. Positions 35, 59, and 80 each coordinate substrate. R117 is a binding site for ATP. R136 is a binding site for substrate. R153 contributes to the ATP binding site.

This sequence belongs to the shikimate kinase family. As to quaternary structure, monomer. Mg(2+) serves as cofactor.

It is found in the cytoplasm. It carries out the reaction shikimate + ATP = 3-phosphoshikimate + ADP + H(+). It participates in metabolic intermediate biosynthesis; chorismate biosynthesis; chorismate from D-erythrose 4-phosphate and phosphoenolpyruvate: step 5/7. In terms of biological role, catalyzes the specific phosphorylation of the 3-hydroxyl group of shikimic acid using ATP as a cosubstrate. The sequence is that of Shikimate kinase from Corynebacterium glutamicum (strain ATCC 13032 / DSM 20300 / JCM 1318 / BCRC 11384 / CCUG 27702 / LMG 3730 / NBRC 12168 / NCIMB 10025 / NRRL B-2784 / 534).